A 633-amino-acid chain; its full sequence is DNA mismatch repair protein MutL (633 aa).

Belongs to the DNA mismatch repair MutL/HexB family.

Its function is as follows. This protein is involved in the repair of mismatches in DNA. It is required for dam-dependent methyl-directed DNA mismatch repair. May act as a 'molecular matchmaker', a protein that promotes the formation of a stable complex between two or more DNA-binding proteins in an ATP-dependent manner without itself being part of a final effector complex. This chain is DNA mismatch repair protein MutL, found in Bacillus pumilus (strain SAFR-032).